A 2324-amino-acid chain; its full sequence is Acetyl-CoA carboxylase (2324 aa).

The residue at position 1 (Met-1) is an N-acetylmethionine. Residues 1 to 34 (MEESSQPAKPLEMNPHSRFIIGSVSEDNSEDETS) form a disordered region. 2 positions are modified to phosphoserine: Ser-78 and Ser-80. In terms of domain architecture, Biotin carboxylation spans 117–618 (VIEKVLIANN…DTGWLDRLIA (502 aa)). Positions 275–466 (QKRILNVPQE…LPAAQLQIAM (192 aa)) constitute an ATP-grasp domain. ATP is bound at residue 315–320 (GGGGKG). 3 residues coordinate Mn(2+): Glu-424, Glu-437, and Asn-439. Arg-441 is a catalytic residue. The region spanning 745–819 (FEKENDPSIL…DPGCVIAKLQ (75 aa)) is the Biotinyl-binding domain. An N6-biotinyllysine modification is found at Lys-786. Residue Ser-1193 is modified to Phosphoserine. In terms of domain architecture, CoA carboxyltransferase N-terminal spans 1553–1891 (PYVTKDLLQS…SVYSPVPILK (339 aa)). The segment at 1553–2211 (PYVTKDLLQS…EDVVKKKIHD (659 aa)) is carboxyltransferase. CoA-binding residues include Arg-1800, Lys-2104, and Arg-2106. The region spanning 1895 to 2211 (PIDRTIDFVP…EDVVKKKIHD (317 aa)) is the CoA carboxyltransferase C-terminal domain.

It depends on biotin as a cofactor. Mn(2+) is required as a cofactor.

The protein resides in the cytoplasm. The catalysed reaction is hydrogencarbonate + acetyl-CoA + ATP = malonyl-CoA + ADP + phosphate + H(+). The enzyme catalyses N(6)-biotinyl-L-lysyl-[protein] + hydrogencarbonate + ATP = N(6)-carboxybiotinyl-L-lysyl-[protein] + ADP + phosphate + H(+). It functions in the pathway lipid metabolism; malonyl-CoA biosynthesis; malonyl-CoA from acetyl-CoA: step 1/1. By phosphorylation. Functionally, catalyzes the rate-limiting reaction in the biogenesis of long-chain fatty acids. Carries out three functions: biotin carboxyl carrier protein, biotin carboxylase and carboxyltransferase. This is Acetyl-CoA carboxylase (ACAC) from Gallus gallus (Chicken).